The following is a 1139-amino-acid chain: Retinoblastoma-like protein 2 (1139 aa).

Residues 1-45 (MPSGGDQSPPPPPPPPAAAASDEEEEDDGEAEDAAPPAESPTPQI) form a disordered region. Residues 8-17 (SPPPPPPPPA) are compositionally biased toward pro residues. The span at 21-33 (SDEEEEDDGEAED) shows a compositional bias: acidic residues. Serine 413 is modified (phosphoserine). Residue threonine 417 is modified to Phosphothreonine. The interval 417–616 (TPVSTATHSL…EKIRDNENRV (200 aa)) is domain A. The interval 417-1024 (TPVSTATHSL…KQIKTFAMKY (608 aa)) is pocket; binds E1A. Serine 420 carries O-linked (GlcNAc) serine glycosylation. A spacer region spans residues 617–827 (PTCEEVMPPQ…KQGQSVTSSS (211 aa)). Position 639 is a phosphoserine (serine 639). A Phosphothreonine modification is found at threonine 642. Residues 654-678 (GGLGRSITSPTTLYDRYSSPPASTT) form a disordered region. A phosphoserine mark is found at serine 662, serine 672, and serine 688. The span at 810 to 827 (ISPGGQQQKQGQSVTSSS) shows a compositional bias: low complexity. 2 disordered regions span residues 810-831 (ISPGGQQQKQGQSVTSSSNRPR) and 933-999 (KGKR…DMEE). The domain B stretch occupies residues 828 to 1024 (NRPRKTSSLS…KQIKTFAMKY (197 aa)). Positions 941–955 (SGSSDSRSHQNSPTE) are enriched in polar residues. A phosphoserine mark is found at serine 948, serine 952, serine 966, serine 971, serine 972, and serine 973. The span at 964-973 (DSSPVMRSSS) shows a compositional bias: low complexity. A Phosphothreonine modification is found at threonine 974. Positions 977 to 987 (VPQPSSAPPTP) are enriched in pro residues. A phosphoserine mark is found at serine 981 and serine 982. At threonine 986 the chain carries Phosphothreonine. Serine 1035, serine 1068, serine 1080, and serine 1112 each carry phosphoserine.

The protein belongs to the retinoblastoma protein (RB) family. In terms of assembly, interacts with AATF. Interacts with KMT5B, KMT5C and USP4. Component of the DREAM complex (also named LINC complex) at least composed of E2F4, E2F5, LIN9, LIN37, LIN52, LIN54, MYBL1, MYBL2, RBL1, RBL2, RBBP4, TFDP1 and TFDP2. The complex exists in quiescent cells where it represses cell cycle-dependent genes. It dissociates in S phase when LIN9, LIN37, LIN52 and LIN54 form a subcomplex that binds to MYBL2. Interacts with RINT1. Interacts with PML (isoform PML-1, isoform PML-2, isoform PML-3, isoform PML-4 and isoform PML-5). Interacts with RBBP9. Interacts with CD53. As to quaternary structure, (Microbial infection) Interacts with JC virus small t antigen. Post-translationally, during G0 and early G1 phase of the cell cycle, phosphorylated on Ser-639 and on 5 sites within the domain B. Phosphorylation on Ser-672 in G1 leads to its ubiquitin-dependent proteolysis.

The protein localises to the nucleus. Key regulator of entry into cell division. Directly involved in heterochromatin formation by maintaining overall chromatin structure and, in particular, that of constitutive heterochromatin by stabilizing histone methylation. Recruits and targets histone methyltransferases KMT5B and KMT5C, leading to epigenetic transcriptional repression. Controls histone H4 'Lys-20' trimethylation. Probably acts as a transcription repressor by recruiting chromatin-modifying enzymes to promoters. Potent inhibitor of E2F-mediated trans-activation, associates preferentially with E2F5. Binds to cyclins A and E. Binds to and may be involved in the transforming capacity of the adenovirus E1A protein. May act as a tumor suppressor. The polypeptide is Retinoblastoma-like protein 2 (RBL2) (Homo sapiens (Human)).